Here is a 31-residue protein sequence, read N- to C-terminus: Protein YmiC (31 aa).

Residues 9-29 form a helical membrane-spanning segment; sequence WSWMGAFSLSMLFWAELLWII.

It is found in the cell inner membrane. This chain is Protein YmiC, found in Escherichia coli (strain K12).